A 56-amino-acid polypeptide reads, in one-letter code: MAVQKNKKSRSKRGMRRSHDSLSTPQLSVDSTSGELHLRHNVTADGFYRGQKVINK.

Positions 1–16 are enriched in basic residues; that stretch reads MAVQKNKKSRSKRGMR. Residues 1–36 are disordered; that stretch reads MAVQKNKKSRSKRGMRRSHDSLSTPQLSVDSTSGEL. A compositionally biased stretch (polar residues) spans 21-34; that stretch reads SLSTPQLSVDSTSG.

The protein belongs to the bacterial ribosomal protein bL32 family.

This is Large ribosomal subunit protein bL32 from Shewanella sediminis (strain HAW-EB3).